A 404-amino-acid polypeptide reads, in one-letter code: MKNSIPIDLIYEILSRLPAKSVARCRCVSKRWRSILRHQVFTELFLTRSNARPRLLIGVQQDGEWSFLSTPQPQNRHESSSLVVAAADFHTKFSSGKSRHQCTYASGGSYSYLGFDPIDKEFKVLFMDTCDFIASKDEDHYILTLGTGELKWRKIQCPFTHEPFWERICINGVLYYSAYYSDSNGRSHLIACFDVRSEKFNFIATKHRYDQLINYKGKLCGINLEYARHVGGFPVKLSMWVLEDVEKPEWSKHVYSLWTESEVVKVNRNLSVSGMTATGDIVLSMEDATNPFYVFNFNPDRNTLQVQSVEIQGLGANRDHIACHAFVDYVEDFSVSDAVLQLKSSPLQQQGQDTSHDLSKSVKNKQLDNYEFLANKLNHSVSLAILFCLFFLLFNYLIRLCWVR.

The F-box domain maps to 1–44 (MKNSIPIDLIYEILSRLPAKSVARCRCVSKRWRSILRHQVFTEL). Residues 383–403 (LAILFCLFFLLFNYLIRLCWV) form a helical membrane-spanning segment.

It localises to the membrane. This chain is F-box only protein 12 (FBX12), found in Arabidopsis thaliana (Mouse-ear cress).